A 274-amino-acid polypeptide reads, in one-letter code: Diaminopimelate epimerase (274 aa).

Substrate-binding residues include Asn-11, Gln-44, and Asn-64. Cys-73 serves as the catalytic Proton donor. Substrate-binding positions include 74 to 75 (GN), Asn-157, Asn-190, and 208 to 209 (ER). The active-site Proton acceptor is Cys-217. 218-219 (GS) provides a ligand contact to substrate.

The protein belongs to the diaminopimelate epimerase family. In terms of assembly, homodimer.

It is found in the cytoplasm. It catalyses the reaction (2S,6S)-2,6-diaminopimelate = meso-2,6-diaminopimelate. Its pathway is amino-acid biosynthesis; L-lysine biosynthesis via DAP pathway; DL-2,6-diaminopimelate from LL-2,6-diaminopimelate: step 1/1. In terms of biological role, catalyzes the stereoinversion of LL-2,6-diaminopimelate (L,L-DAP) to meso-diaminopimelate (meso-DAP), a precursor of L-lysine and an essential component of the bacterial peptidoglycan. This chain is Diaminopimelate epimerase, found in Salmonella agona (strain SL483).